A 171-amino-acid chain; its full sequence is ATP synthase subunit b (171 aa).

A helical membrane pass occupies residues F2 to L22.

Belongs to the ATPase B chain family. In terms of assembly, F-type ATPases have 2 components, F(1) - the catalytic core - and F(0) - the membrane proton channel. F(1) has five subunits: alpha(3), beta(3), gamma(1), delta(1), epsilon(1). F(0) has three main subunits: a(1), b(2) and c(10-14). The alpha and beta chains form an alternating ring which encloses part of the gamma chain. F(1) is attached to F(0) by a central stalk formed by the gamma and epsilon chains, while a peripheral stalk is formed by the delta and b chains.

The protein resides in the cell inner membrane. Its function is as follows. F(1)F(0) ATP synthase produces ATP from ADP in the presence of a proton or sodium gradient. F-type ATPases consist of two structural domains, F(1) containing the extramembraneous catalytic core and F(0) containing the membrane proton channel, linked together by a central stalk and a peripheral stalk. During catalysis, ATP synthesis in the catalytic domain of F(1) is coupled via a rotary mechanism of the central stalk subunits to proton translocation. Functionally, component of the F(0) channel, it forms part of the peripheral stalk, linking F(1) to F(0). The polypeptide is ATP synthase subunit b (Helicobacter pylori (strain J99 / ATCC 700824) (Campylobacter pylori J99)).